The following is an 84-amino-acid chain: Protein SlyX homolog (84 aa).

Belongs to the SlyX family.

In Mannheimia succiniciproducens (strain KCTC 0769BP / MBEL55E), this protein is Protein SlyX homolog.